The chain runs to 76 residues: Large ribosomal subunit protein eL20 (76 aa).

It belongs to the eukaryotic ribosomal protein eL20 family. Part of the 50S ribosomal subunit. Binds 23S rRNA.

The polypeptide is Large ribosomal subunit protein eL20 (Methanocaldococcus jannaschii (strain ATCC 43067 / DSM 2661 / JAL-1 / JCM 10045 / NBRC 100440) (Methanococcus jannaschii)).